Reading from the N-terminus, the 1224-residue chain is DNA-directed RNA polymerase subunit beta (1224 aa).

This sequence belongs to the RNA polymerase beta chain family. In terms of assembly, the RNAP catalytic core consists of 2 alpha, 1 beta, 1 beta' and 1 omega subunit. When a sigma factor is associated with the core the holoenzyme is formed, which can initiate transcription.

The enzyme catalyses RNA(n) + a ribonucleoside 5'-triphosphate = RNA(n+1) + diphosphate. DNA-dependent RNA polymerase catalyzes the transcription of DNA into RNA using the four ribonucleoside triphosphates as substrates. The chain is DNA-directed RNA polymerase subunit beta from Pelotomaculum thermopropionicum (strain DSM 13744 / JCM 10971 / SI).